The following is a 236-amino-acid chain: Ureidoacrylate amidohydrolase RutB (236 aa).

The Proton acceptor role is filled by D24. K133 is an active-site residue. C166 functions as the Nucleophile in the catalytic mechanism.

This sequence belongs to the isochorismatase family. RutB subfamily.

It carries out the reaction (Z)-3-ureidoacrylate + H2O + H(+) = (Z)-3-aminoacrylate + NH4(+) + CO2. The enzyme catalyses (Z)-3-ureidoacrylate + H2O = (Z)-3-aminoacrylate + carbamate + H(+). The catalysed reaction is (Z)-2-methylureidoacrylate + H2O + H(+) = (Z)-2-methylaminoacrylate + NH4(+) + CO2. Hydrolyzes ureidoacrylate to form aminoacrylate and carbamate. The carbamate hydrolyzes spontaneously, thereby releasing one of the nitrogen atoms of the pyrimidine ring as ammonia and one of its carbon atoms as CO2. The sequence is that of Ureidoacrylate amidohydrolase RutB from Klebsiella pneumoniae (strain 342).